Consider the following 152-residue polypeptide: Nuclear cap-binding protein subunit 2 (152 aa).

MRNA-binding positions include Y8, Y31, 100–104 (RTDWD), 111–115 (RQFGR), and 121–122 (QV). The RRM domain maps to 28–106 (TTLYVGNMSF…RIIRTDWDAG (79 aa)).

It belongs to the RRM NCBP2 family. Component of the nuclear cap-binding complex (CBC), a heterodimer composed of Cbp80 and Cbp20 that interacts with m7GpppG-capped RNA.

The protein localises to the nucleus. Its function is as follows. Component of the cap-binding complex (CBC), which binds co-transcriptionally to the 5' cap of pre-mRNAs and is involved in various processes such as pre-mRNA splicing and RNA-mediated gene silencing (RNAi). The CBC complex is involved in miRNA-mediated RNA interference and is required for primary microRNAs (miRNAs) processing. Also involved in innate immunity via the short interfering RNAs (siRNAs) processing machinery by restricting the viral RNA production. In the CBC complex, Cbp20 recognizes and binds capped RNAs (m7GpppG-capped RNA) but requires Cbp80 to stabilize the movement of its N-terminal loop and lock the CBC into a high affinity cap-binding state with the cap structure. The sequence is that of Nuclear cap-binding protein subunit 2 (Cbp20) from Ixodes scapularis (Black-legged tick).